We begin with the raw amino-acid sequence, 402 residues long: Arginine biosynthesis bifunctional protein ArgJ (402 aa).

The substrate site is built by T149, K175, T186, E266, N397, and T402. The active-site Nucleophile is T186.

Belongs to the ArgJ family. Heterotetramer of two alpha and two beta chains.

It is found in the cytoplasm. It carries out the reaction N(2)-acetyl-L-ornithine + L-glutamate = N-acetyl-L-glutamate + L-ornithine. It catalyses the reaction L-glutamate + acetyl-CoA = N-acetyl-L-glutamate + CoA + H(+). It functions in the pathway amino-acid biosynthesis; L-arginine biosynthesis; L-ornithine and N-acetyl-L-glutamate from L-glutamate and N(2)-acetyl-L-ornithine (cyclic): step 1/1. The protein operates within amino-acid biosynthesis; L-arginine biosynthesis; N(2)-acetyl-L-ornithine from L-glutamate: step 1/4. Its function is as follows. Catalyzes two activities which are involved in the cyclic version of arginine biosynthesis: the synthesis of N-acetylglutamate from glutamate and acetyl-CoA as the acetyl donor, and of ornithine by transacetylation between N(2)-acetylornithine and glutamate. This chain is Arginine biosynthesis bifunctional protein ArgJ, found in Prochlorococcus marinus subsp. pastoris (strain CCMP1986 / NIES-2087 / MED4).